A 472-amino-acid polypeptide reads, in one-letter code: Probable dipeptidase A (472 aa).

Cys-10 is an active-site residue.

This sequence belongs to the peptidase C69 family.

It catalyses the reaction an L-aminoacyl-L-amino acid + H2O = 2 an L-alpha-amino acid. This is Probable dipeptidase A (pepDA) from Streptococcus pyogenes serotype M1.